A 276-amino-acid chain; its full sequence is Phosphatidylglycerol--prolipoprotein diacylglyceryl transferase (276 aa).

The next 3 helical transmembrane spans lie at 17–37, 63–83, and 95–115; these read LAIHWYGLTYLAAFGLFFFLA, ILFLGVMGVVIGGRLGYCLFY, and ILAVWQGGMSFHGGMLGVLAS. Position 146 (Arg146) interacts with a 1,2-diacyl-sn-glycero-3-phospho-(1'-sn-glycerol). A run of 3 helical transmembrane segments spans residues 182–202, 209–229, and 235–255; these read SQVYQFLLEGLLLFVLLWLYA, GQVSGAFLVGYGVFRFIAEYF, and FLGILALGLSMGQWLCVPMIV.

The protein belongs to the Lgt family.

It localises to the cell inner membrane. The catalysed reaction is L-cysteinyl-[prolipoprotein] + a 1,2-diacyl-sn-glycero-3-phospho-(1'-sn-glycerol) = an S-1,2-diacyl-sn-glyceryl-L-cysteinyl-[prolipoprotein] + sn-glycerol 1-phosphate + H(+). The protein operates within protein modification; lipoprotein biosynthesis (diacylglyceryl transfer). Its function is as follows. Catalyzes the transfer of the diacylglyceryl group from phosphatidylglycerol to the sulfhydryl group of the N-terminal cysteine of a prolipoprotein, the first step in the formation of mature lipoproteins. The polypeptide is Phosphatidylglycerol--prolipoprotein diacylglyceryl transferase (Polaromonas sp. (strain JS666 / ATCC BAA-500)).